Here is a 421-residue protein sequence, read N- to C-terminus: UDP-N-acetylglucosamine 1-carboxyvinyltransferase (421 aa).

22–23 is a phosphoenolpyruvate binding site; it reads KN. Arg-93 serves as a coordination point for UDP-N-acetyl-alpha-D-glucosamine. The active-site Proton donor is Cys-117. Cys-117 carries the 2-(S-cysteinyl)pyruvic acid O-phosphothioketal modification. UDP-N-acetyl-alpha-D-glucosamine contacts are provided by residues 122–126, Asp-308, and Ile-330; that span reads RPVDL.

It belongs to the EPSP synthase family. MurA subfamily.

The protein localises to the cytoplasm. It catalyses the reaction phosphoenolpyruvate + UDP-N-acetyl-alpha-D-glucosamine = UDP-N-acetyl-3-O-(1-carboxyvinyl)-alpha-D-glucosamine + phosphate. It participates in cell wall biogenesis; peptidoglycan biosynthesis. Functionally, cell wall formation. Adds enolpyruvyl to UDP-N-acetylglucosamine. The polypeptide is UDP-N-acetylglucosamine 1-carboxyvinyltransferase (Pseudomonas entomophila (strain L48)).